Here is a 355-residue protein sequence, read N- to C-terminus: UDP-N-acetylglucosamine--N-acetylmuramyl-(pentapeptide) pyrophosphoryl-undecaprenol N-acetylglucosamine transferase (355 aa).

UDP-N-acetyl-alpha-D-glucosamine-binding positions include 14–16, asparagine 126, arginine 162, serine 190, isoleucine 243, 262–267, and glutamine 288; these read SGG and ALTVSE.

This sequence belongs to the glycosyltransferase 28 family. MurG subfamily.

It localises to the cell inner membrane. The enzyme catalyses di-trans,octa-cis-undecaprenyl diphospho-N-acetyl-alpha-D-muramoyl-L-alanyl-D-glutamyl-meso-2,6-diaminopimeloyl-D-alanyl-D-alanine + UDP-N-acetyl-alpha-D-glucosamine = di-trans,octa-cis-undecaprenyl diphospho-[N-acetyl-alpha-D-glucosaminyl-(1-&gt;4)]-N-acetyl-alpha-D-muramoyl-L-alanyl-D-glutamyl-meso-2,6-diaminopimeloyl-D-alanyl-D-alanine + UDP + H(+). The protein operates within cell wall biogenesis; peptidoglycan biosynthesis. In terms of biological role, cell wall formation. Catalyzes the transfer of a GlcNAc subunit on undecaprenyl-pyrophosphoryl-MurNAc-pentapeptide (lipid intermediate I) to form undecaprenyl-pyrophosphoryl-MurNAc-(pentapeptide)GlcNAc (lipid intermediate II). The polypeptide is UDP-N-acetylglucosamine--N-acetylmuramyl-(pentapeptide) pyrophosphoryl-undecaprenol N-acetylglucosamine transferase (Blochmanniella pennsylvanica (strain BPEN)).